Consider the following 160-residue polypeptide: Probable chemoreceptor glutamine deamidase CheD 2 (160 aa).

Belongs to the CheD family.

It catalyses the reaction L-glutaminyl-[protein] + H2O = L-glutamyl-[protein] + NH4(+). In terms of biological role, probably deamidates glutamine residues to glutamate on methyl-accepting chemotaxis receptors (MCPs), playing an important role in chemotaxis. In Geobacter sulfurreducens (strain ATCC 51573 / DSM 12127 / PCA), this protein is Probable chemoreceptor glutamine deamidase CheD 2.